The chain runs to 316 residues: 4-hydroxy-3-methylbut-2-enyl diphosphate reductase (316 aa).

Residue Cys-12 coordinates [4Fe-4S] cluster. Positions 41 and 74 each coordinate (2E)-4-hydroxy-3-methylbut-2-enyl diphosphate. Residues His-41 and His-74 each coordinate dimethylallyl diphosphate. Isopentenyl diphosphate-binding residues include His-41 and His-74. Cys-96 provides a ligand contact to [4Fe-4S] cluster. His-124 contributes to the (2E)-4-hydroxy-3-methylbut-2-enyl diphosphate binding site. His-124 contacts dimethylallyl diphosphate. Position 124 (His-124) interacts with isopentenyl diphosphate. Glu-126 (proton donor) is an active-site residue. Thr-167 contributes to the (2E)-4-hydroxy-3-methylbut-2-enyl diphosphate binding site. Position 197 (Cys-197) interacts with [4Fe-4S] cluster. 4 residues coordinate (2E)-4-hydroxy-3-methylbut-2-enyl diphosphate: Ser-225, Ser-226, Asn-227, and Ser-269. Dimethylallyl diphosphate contacts are provided by Ser-225, Ser-226, Asn-227, and Ser-269. Positions 225, 226, 227, and 269 each coordinate isopentenyl diphosphate.

Belongs to the IspH family. As to quaternary structure, homodimer. It depends on [4Fe-4S] cluster as a cofactor.

The enzyme catalyses isopentenyl diphosphate + 2 oxidized [2Fe-2S]-[ferredoxin] + H2O = (2E)-4-hydroxy-3-methylbut-2-enyl diphosphate + 2 reduced [2Fe-2S]-[ferredoxin] + 2 H(+). It carries out the reaction dimethylallyl diphosphate + 2 oxidized [2Fe-2S]-[ferredoxin] + H2O = (2E)-4-hydroxy-3-methylbut-2-enyl diphosphate + 2 reduced [2Fe-2S]-[ferredoxin] + 2 H(+). It functions in the pathway isoprenoid biosynthesis; dimethylallyl diphosphate biosynthesis; dimethylallyl diphosphate from (2E)-4-hydroxy-3-methylbutenyl diphosphate: step 1/1. Its pathway is isoprenoid biosynthesis; isopentenyl diphosphate biosynthesis via DXP pathway; isopentenyl diphosphate from 1-deoxy-D-xylulose 5-phosphate: step 6/6. Functionally, catalyzes the conversion of 1-hydroxy-2-methyl-2-(E)-butenyl 4-diphosphate (HMBPP) into a mixture of isopentenyl diphosphate (IPP) and dimethylallyl diphosphate (DMAPP). Acts in the terminal step of the DOXP/MEP pathway for isoprenoid precursor biosynthesis. The protein is 4-hydroxy-3-methylbut-2-enyl diphosphate reductase of Cronobacter sakazakii (strain ATCC BAA-894) (Enterobacter sakazakii).